We begin with the raw amino-acid sequence, 426 residues long: MGQTITEKIFSEHAGKKVYAGEIVRSPIDMVIGNDITTPISIRAFEEGGFEKLANPDGFAIVLDHFIPAKDIASANQAKISRDFALKHNLKNFFDEKDMGIEHALLPEKGLVIPGDVIIGADSHTCTHGALGAFSTGMGSTDISFGMITGGNWFKVPESIKVIFKGKPAPFVTGKDLILEIIRILGVDGALYKALEFTGDTIQYLSMDDRFSLCNMAIEAGAKNGIVAYDEITKEFLDKVGEANGGLRAEPKIHYSDEDANYCQVIEIDVAKLEPVIAYPYLPSNGHSVSQAVSDNIKVDQVFIGSCTNGRLSDFKIAAEILAGQKVARHVRLILTPGTQKILREATKLGYIDTLVDAGAVVSNPTCGACLGGYMGILGDNEVCISTTNRNFVGRMGSRSSKIYLANSAVAAASAISGYITDPRSL.

The [4Fe-4S] cluster site is built by Cys307, Cys367, and Cys370.

It belongs to the aconitase/IPM isomerase family. LeuC type 2 subfamily. In terms of assembly, heterodimer of LeuC and LeuD. [4Fe-4S] cluster serves as cofactor.

It catalyses the reaction (2R,3S)-3-isopropylmalate = (2S)-2-isopropylmalate. The protein operates within amino-acid biosynthesis; L-leucine biosynthesis; L-leucine from 3-methyl-2-oxobutanoate: step 2/4. Catalyzes the isomerization between 2-isopropylmalate and 3-isopropylmalate, via the formation of 2-isopropylmaleate. This is 3-isopropylmalate dehydratase large subunit from Aliarcobacter butzleri (strain RM4018) (Arcobacter butzleri).